Consider the following 253-residue polypeptide: Sec-independent protein translocase protein TatC (253 aa).

5 consecutive transmembrane segments (helical) span residues 19 to 39 (ILIIVVFFVIALVVGFFLATP), 70 to 90 (FAFTSAFILVFPIILYQLWAF), 109 to 129 (IAFFLFLGGLSFAYFILFPFL), 154 to 174 (FLFQITMPFGVLFQLPVVVMF), and 194 to 214 (FFVLLVVAGFITPPELISHLM).

Belongs to the TatC family. As to quaternary structure, forms a complex with TatA.

It is found in the cell membrane. Functionally, part of the twin-arginine translocation (Tat) system that transports large folded proteins containing a characteristic twin-arginine motif in their signal peptide across membranes. The chain is Sec-independent protein translocase protein TatC from Halalkalibacterium halodurans (strain ATCC BAA-125 / DSM 18197 / FERM 7344 / JCM 9153 / C-125) (Bacillus halodurans).